The following is a 298-amino-acid chain: MAARRPSPPPASPPPPRPRSTTTTRTTSSASAAPAAAQRLVAMAGSGKFFVGGNWKCNGTKESISKLVSDLNAATLESDVDVVVAPPFIYIDQVKSSLTDRIEVSAQNTWIGKGGAFTGEISAEQLVDIGCQWVILGHSERRHVIGEDDEFIGKKAAYALSQNLKVMACIGELLEEREAGKTFDVCFKQMKAFADNITDWTNVVIAYEPVWAIGTGKVASPEQAQEVHAAVRDWLKTNVSADVASTVRIIYGGSVNAANCAELAKKEDIDGFLVGGASLKGPDFATICNSVTSKKVTA.

Pro residues predominate over residues 1–18 (MAARRPSPPPASPPPPRP). Residues 1–32 (MAARRPSPPPASPPPPRPRSTTTTRTTSSASA) are disordered. The N-terminal 43 residues, 1–43 (MAARRPSPPPASPPPPRPRSTTTTRTTSSASAAPAAAQRLVAM), are a transit peptide targeting the chloroplast. Over residues 19 to 32 (RSTTTTRTTSSASA) the composition is skewed to low complexity. Positions 54 and 56 each coordinate substrate. The active-site Electrophile is the His138. Position 186 is a cysteine derivative (Cys186). Residue Glu208 is the Proton acceptor of the active site.

This sequence belongs to the triosephosphate isomerase family. In terms of assembly, homodimer.

Its subcellular location is the plastid. It is found in the chloroplast. The catalysed reaction is D-glyceraldehyde 3-phosphate = dihydroxyacetone phosphate. It functions in the pathway carbohydrate biosynthesis; Calvin cycle. This chain is Triosephosphate isomerase, chloroplastic, found in Secale cereale (Rye).